Reading from the N-terminus, the 205-residue chain is SCO2-like protein RP587 (205 aa).

Positions 82, 86, and 172 each coordinate Cu cation.

The protein belongs to the SCO1/2 family.

In Rickettsia prowazekii (strain Madrid E), this protein is SCO2-like protein RP587.